Reading from the N-terminus, the 361-residue chain is 3-isopropylmalate dehydrogenase (361 aa).

78–91 provides a ligand contact to NAD(+); it reads GTQWDSLPRHLRPE. Substrate contacts are provided by Arg98, Arg108, Arg136, and Asp226. Residues Asp226, Asp250, and Asp254 each coordinate Mg(2+). Residue 284-296 coordinates NAD(+); that stretch reads GSAPDIAGQDKAN.

This sequence belongs to the isocitrate and isopropylmalate dehydrogenases family. LeuB type 1 subfamily. As to quaternary structure, homodimer. It depends on Mg(2+) as a cofactor. Mn(2+) is required as a cofactor.

The protein localises to the cytoplasm. It carries out the reaction (2R,3S)-3-isopropylmalate + NAD(+) = 4-methyl-2-oxopentanoate + CO2 + NADH. It participates in amino-acid biosynthesis; L-leucine biosynthesis; L-leucine from 3-methyl-2-oxobutanoate: step 3/4. Its function is as follows. Catalyzes the oxidation of 3-carboxy-2-hydroxy-4-methylpentanoate (3-isopropylmalate) to 3-carboxy-4-methyl-2-oxopentanoate. The product decarboxylates to 4-methyl-2 oxopentanoate. This is 3-isopropylmalate dehydrogenase from Thermosynechococcus vestitus (strain NIES-2133 / IAM M-273 / BP-1).